The following is an 89-amino-acid chain: Large ribosomal subunit protein bL27 (89 aa).

The segment at Met-1–Gly-22 is disordered.

This sequence belongs to the bacterial ribosomal protein bL27 family.

The chain is Large ribosomal subunit protein bL27 from Brucella melitensis biotype 1 (strain ATCC 23456 / CCUG 17765 / NCTC 10094 / 16M).